A 178-amino-acid polypeptide reads, in one-letter code: Ribosome maturation factor RimM (178 aa).

The 81-residue stretch at Asp98–Phe178 folds into the PRC barrel domain.

Belongs to the RimM family. As to quaternary structure, binds ribosomal protein uS19.

It is found in the cytoplasm. An accessory protein needed during the final step in the assembly of 30S ribosomal subunit, possibly for assembly of the head region. Essential for efficient processing of 16S rRNA. May be needed both before and after RbfA during the maturation of 16S rRNA. It has affinity for free ribosomal 30S subunits but not for 70S ribosomes. This chain is Ribosome maturation factor RimM, found in Cellvibrio japonicus (strain Ueda107) (Pseudomonas fluorescens subsp. cellulosa).